The sequence spans 346 residues: tRNA N6-adenosine threonylcarbamoyltransferase (346 aa).

Residues His-111 and His-115 each contribute to the Fe cation site. Residues 134–138, Asp-167, Gly-180, and Asn-279 contribute to the substrate site; that span reads LVSGG. Position 307 (Asp-307) interacts with Fe cation.

Belongs to the KAE1 / TsaD family. Fe(2+) serves as cofactor.

The protein resides in the cytoplasm. It carries out the reaction L-threonylcarbamoyladenylate + adenosine(37) in tRNA = N(6)-L-threonylcarbamoyladenosine(37) in tRNA + AMP + H(+). In terms of biological role, required for the formation of a threonylcarbamoyl group on adenosine at position 37 (t(6)A37) in tRNAs that read codons beginning with adenine. Is involved in the transfer of the threonylcarbamoyl moiety of threonylcarbamoyl-AMP (TC-AMP) to the N6 group of A37, together with TsaE and TsaB. TsaD likely plays a direct catalytic role in this reaction. The sequence is that of tRNA N6-adenosine threonylcarbamoyltransferase from Burkholderia ambifaria (strain MC40-6).